The chain runs to 337 residues: Inositol 2-dehydrogenase 1 (337 aa).

This sequence belongs to the Gfo/Idh/MocA family. Homotetramer.

The catalysed reaction is myo-inositol + NAD(+) = scyllo-inosose + NADH + H(+). In terms of biological role, involved in the oxidation of myo-inositol (MI) to 2-keto-myo-inositol (2KMI or 2-inosose). The chain is Inositol 2-dehydrogenase 1 from Paenarthrobacter aurescens (strain TC1).